Consider the following 146-residue polypeptide: Histone H2A.1 (146 aa).

The residue at position 1 (Met1) is an N-acetylmethionine. Residues 1 to 24 are disordered; it reads MDATKTTKGAGGRKGGPRKKSVTK. Residues 142 to 145 carry the SPKK motif motif; the sequence is SPKK.

It belongs to the histone H2A family. The nucleosome is a histone octamer containing two molecules each of H2A, H2B, H3 and H4 assembled in one H3-H4 heterotetramer and two H2A-H2B heterodimers. The octamer wraps approximately 147 bp of DNA. As to expression, high expression in meristematic tissues, in cells of the root pericycle and in shoot cortical cells undergoing endoduplication of their DNA.

It localises to the nucleus. The protein localises to the chromosome. Core component of nucleosome. Nucleosomes wrap and compact DNA into chromatin, limiting DNA accessibility to the cellular machineries which require DNA as a template. Histones thereby play a central role in transcription regulation, DNA repair, DNA replication and chromosomal stability. DNA accessibility is regulated via a complex set of post-translational modifications of histones, also called histone code, and nucleosome remodeling. The protein is Histone H2A.1 of Solanum lycopersicum (Tomato).